Consider the following 1104-residue polypeptide: Isoleucine--tRNA ligase (1104 aa).

The 'HIGH' region motif lies at 48 to 58; that stretch reads PYTTGRIHLGT. The short motif at 644 to 648 is the 'KMSKS' region element; it reads KMSKS. An ATP-binding site is contributed by lysine 647.

It belongs to the class-I aminoacyl-tRNA synthetase family. IleS type 2 subfamily. In terms of assembly, monomer. Zn(2+) is required as a cofactor.

It is found in the cytoplasm. The catalysed reaction is tRNA(Ile) + L-isoleucine + ATP = L-isoleucyl-tRNA(Ile) + AMP + diphosphate. Catalyzes the attachment of isoleucine to tRNA(Ile). As IleRS can inadvertently accommodate and process structurally similar amino acids such as valine, to avoid such errors it has two additional distinct tRNA(Ile)-dependent editing activities. One activity is designated as 'pretransfer' editing and involves the hydrolysis of activated Val-AMP. The other activity is designated 'posttransfer' editing and involves deacylation of mischarged Val-tRNA(Ile). This is Isoleucine--tRNA ligase from Methanocella arvoryzae (strain DSM 22066 / NBRC 105507 / MRE50).